The chain runs to 546 residues: Probable T-complex protein 1 subunit theta (546 aa).

Residues M527–D546 are disordered.

It belongs to the TCP-1 chaperonin family. In terms of assembly, heterooligomeric complex of about 850 to 900 kDa that forms two stacked rings, 12 to 16 nm in diameter.

It is found in the cytoplasm. Its function is as follows. Molecular chaperone; assists the folding of proteins upon ATP hydrolysis. Known to play a role, in vitro, in the folding of actin and tubulin. The protein is Probable T-complex protein 1 subunit theta (cct8) of Schizosaccharomyces pombe (strain 972 / ATCC 24843) (Fission yeast).